Reading from the N-terminus, the 573-residue chain is uncharacterized protein (573 aa).

Residues 15-298 (AGIALILMLT…FPFLIMIFTR (284 aa)) enclose the ABC transmembrane type-1 domain. A run of 6 helical transmembrane segments spans residues 17–37 (IALI…LLIA), 52–72 (VWIW…AGML), 127–147 (IFMS…GIVL), 153–173 (VKLG…LLWV), 238–258 (FTMP…LWAG), and 275–295 (IINY…LIMI). In terms of domain architecture, ABC transporter spans 330–563 (IEFQHVSFRY…SQLYKRIYES (234 aa)). Residue 364-371 (GATGSGKS) coordinates ATP.

Belongs to the ABC transporter superfamily.

The protein localises to the cell membrane. This is an uncharacterized protein from Bacillus subtilis (strain 168).